The chain runs to 576 residues: Arginine--tRNA ligase (576 aa).

The short motif at 126–136 (ANPTGPMHIGH) is the 'HIGH' region element.

The protein belongs to the class-I aminoacyl-tRNA synthetase family. Monomer.

It is found in the cytoplasm. It catalyses the reaction tRNA(Arg) + L-arginine + ATP = L-arginyl-tRNA(Arg) + AMP + diphosphate. The polypeptide is Arginine--tRNA ligase (argS) (Rickettsia prowazekii (strain Madrid E)).